The following is a 314-amino-acid chain: Malate dehydrogenase (314 aa).

NAD(+) is bound by residues 13–18 and D37; that span reads GGGQIG. Residues R88 and R94 each contribute to the substrate site. NAD(+) contacts are provided by residues N101 and 124–126; that span reads VAN. 2 residues coordinate substrate: N126 and R157. The Proton acceptor role is filled by H181.

This sequence belongs to the LDH/MDH superfamily. MDH type 3 family.

The enzyme catalyses (S)-malate + NAD(+) = oxaloacetate + NADH + H(+). In terms of biological role, catalyzes the reversible oxidation of malate to oxaloacetate. In Myxococcus xanthus, this protein is Malate dehydrogenase.